The primary structure comprises 314 residues: D-alanine--D-alanine ligase (314 aa).

In terms of domain architecture, ATP-grasp spans lysine 112 to aspartate 307. Residue alanine 138 to threonine 193 coordinates ATP. Mg(2+)-binding residues include aspartate 261, glutamate 274, and asparagine 276.

This sequence belongs to the D-alanine--D-alanine ligase family. The cofactor is Mg(2+). Mn(2+) is required as a cofactor.

Its subcellular location is the cytoplasm. It carries out the reaction 2 D-alanine + ATP = D-alanyl-D-alanine + ADP + phosphate + H(+). Its pathway is cell wall biogenesis; peptidoglycan biosynthesis. Its function is as follows. Cell wall formation. The polypeptide is D-alanine--D-alanine ligase (Stutzerimonas stutzeri (strain A1501) (Pseudomonas stutzeri)).